The following is a 351-amino-acid chain: Nuclear inhibitor of protein phosphatase 1 (351 aa).

The interaction with CDC5L, SF3B1 and MELK stretch occupies residues 1-142 (MAAAVNSGSS…LPSAVKGDEK (142 aa)). Residues 49-101 (YLFGRNPDLCDFTIDHQSCSRVHAALVYHKHLKRVFLIDLNSTHGTFLGHIRL) form the FHA domain. Residues 143-224 (MGGEDDELKG…VDPSVGRFRN (82 aa)) form an interaction with EED region. At threonine 161 the chain carries Phosphothreonine. 2 positions are modified to phosphoserine: serine 178 and serine 199. 2 consecutive short sequence motifs (nuclear localization signal) follow at residues 185–209 (GNLD…DDEI) and 210–240 (INPE…RMEG). An involved in PP-1 inhibition region spans residues 191-200 (RPKRKRKNSR). The segment at 200 to 203 (RVTF) is involved in PP-1 binding. Residue serine 204 is modified to Phosphoserine. Position 249 is a phosphoserine (serine 249). Position 264 is a phosphotyrosine (tyrosine 264). The segment at 310–329 (AVAINPTPNPAVYNPEAVNE) is interaction with EED. The tract at residues 314–351 (NPTPNPAVYNPEAVNEPKKKKYAKEAWPGKKPTPSLLI) is disordered. The segment at 330–351 (PKKKKYAKEAWPGKKPTPSLLI) is RNA-binding. An involved in PP-1 inhibition region spans residues 331–337 (KKKKYAK). Tyrosine 335 bears the Phosphotyrosine mark.

Interacts with phosphorylated CDC5L, SF3B1 and MELK. Part of the spliceosome. Interacts with PPP1CA, PPP1CB and PPP1CC. Interacts with EED. Part of a complex consisting of PPP1R8, EED, HDAC2 and PP-1. In terms of processing, may be inactivated by phosphorylation on Ser-199 or Ser-204.

The protein localises to the nucleus. It localises to the nucleus speckle. Its function is as follows. Inhibitor subunit of the major nuclear protein phosphatase-1 (PP-1). It has RNA-binding activity but does not cleave RNA and may target PP-1 to RNA-associated substrates. May also be involved in pre-mRNA splicing. Binds DNA and might act as a transcriptional repressor. Essential for cell proliferation and early embryonic development. The polypeptide is Nuclear inhibitor of protein phosphatase 1 (Ppp1r8) (Mus musculus (Mouse)).